Here is a 569-residue protein sequence, read N- to C-terminus: Isochorismate synthase 1, chloroplastic (569 aa).

Residues 1–45 (MASLQFSSQFLGSNTKTHSSIISISRSYSPTPFTRFSRKKYESCS) constitute a chloroplast transit peptide.

It belongs to the isochorismate synthase family. In terms of assembly, monomer. The cofactor is Mg(2+). In terms of tissue distribution, leaves.

Its subcellular location is the plastid. It localises to the chloroplast. The catalysed reaction is chorismate = isochorismate. Its pathway is siderophore biosynthesis; salicylate biosynthesis. Isochorismate synthase involved in the synthesis of salicylic acid (SA) required for both local and systemic acquired resistance (LAR and SAR) while SA synthesized through the phenylalanine ammonium lyase (PAL) pathway seems to potentiate plant cell death. Also involved in phylloquinone (vitamin K1) synthesis. Has no isochorismate pyruvate lyase (IPL) activity. This chain is Isochorismate synthase 1, chloroplastic (ICS1), found in Arabidopsis thaliana (Mouse-ear cress).